The chain runs to 380 residues: Selenoprotein P (380 aa).

An N-terminal signal peptide occupies residues 1 to 19; that stretch reads MWRSLGLALALCLLPYGGA. Residue selenocysteine 59 is a non-standard amino acid, selenocysteine. N-linked (GlcNAc...) asparagine glycosylation is found at asparagine 83, asparagine 176, and asparagine 195. The disordered stretch occupies residues 196-257; the sequence is KTAEPSEAHS…RGQHRQGHLE (62 aa). A compositionally biased stretch (polar residues) spans 221-237; sequence SKPSENQQPGPSETTLP. A compositionally biased stretch (basic residues) spans 241 to 253; that stretch reads LHHHHRHRGQHRQ. A non-standard amino acid (selenocysteine) is located at residue selenocysteine 259. Position 264 is a phosphoserine (serine 264). Residues selenocysteine 277, selenocysteine 318, selenocysteine 330, and selenocysteine 352 are each a non-standard amino acid (selenocysteine). Positions 346–380 are disordered; the sequence is RSPPAAUQNQPMNPMEANPNUSUDNQTRKUKUHSN. Over residues 348-360 the composition is skewed to low complexity; it reads PPAAUQNQPMNPM. Asparagine 365 is a glycosylation site (N-linked (GlcNAc...) asparagine). Residues selenocysteine 366 and selenocysteine 368 are each a non-standard amino acid (selenocysteine). Asparagine 370 carries N-linked (GlcNAc...) asparagine glycosylation. Residues selenocysteine 375 and selenocysteine 377 are each a non-standard amino acid (selenocysteine).

Belongs to the selenoprotein P family. Post-translationally, phosphorylation sites are present in the extracellular medium. As to expression, in the kidney, expressed in the cortex with no expression observed in the medulla (at protein level). Expressed by the liver and secreted in plasma.

It is found in the secreted. Functionally, might be responsible for some of the extracellular antioxidant defense properties of selenium or might be involved in the transport of selenium. May supply selenium to tissues such as brain and testis. This is Selenoprotein P from Mus musculus (Mouse).